We begin with the raw amino-acid sequence, 492 residues long: Serine incorporator 4 (492 aa).

10 helical membrane passes run 59–79 (YILL…KTVV), 113–133 (AVYR…VLLV), 148–168 (SFWS…FCIP), 179–199 (IGIC…TAFA), 219–239 (GVSL…VLLF), 254–274 (LLSL…APCI), 281–301 (SGLL…FSAL), 330–350 (IPDT…VLFA), 421–441 (GFHF…TNWF), and 464–484 (VASC…PLLA).

The protein belongs to the TDE1 family.

It is found in the membrane. Functionally, incorporates a polar amino acid serine into membranes and facilitates the synthesis of two serine-derived lipids, phosphatidylserine and sphingolipids. The polypeptide is Serine incorporator 4 (Serinc4) (Mus musculus (Mouse)).